The sequence spans 531 residues: Membrane protein insertase YidC (531 aa).

Transmembrane regions (helical) follow at residues 5-25 (ALIAVVLSILFFYGYTALFSP), 343-363 (GNYGIAIIIITVIIKVIFYPL), 415-435 (LPMLVQIPVFFALYKALMFSI), and 489-509 (PVVFTFMFLNFPSGLVLYWLV).

The protein belongs to the OXA1/ALB3/YidC family. Type 1 subfamily. As to quaternary structure, interacts with the Sec translocase complex via SecD. Specifically interacts with transmembrane segments of nascent integral membrane proteins during membrane integration.

Its subcellular location is the cell inner membrane. In terms of biological role, required for the insertion and/or proper folding and/or complex formation of integral membrane proteins into the membrane. Involved in integration of membrane proteins that insert both dependently and independently of the Sec translocase complex, as well as at least some lipoproteins. Aids folding of multispanning membrane proteins. The polypeptide is Membrane protein insertase YidC (Geobacter sulfurreducens (strain ATCC 51573 / DSM 12127 / PCA)).